Reading from the N-terminus, the 471-residue chain is Glutamate--tRNA ligase (471 aa).

The short motif at Pro-9–Gly-19 is the 'HIGH' region element. Zn(2+)-binding residues include Cys-98, Cys-100, Cys-125, and Asp-127. The short motif at Lys-237–Arg-241 is the 'KMSKS' region element. Lys-240 provides a ligand contact to ATP.

This sequence belongs to the class-I aminoacyl-tRNA synthetase family. Glutamate--tRNA ligase type 1 subfamily. As to quaternary structure, monomer. Requires Zn(2+) as cofactor.

Its subcellular location is the cytoplasm. The enzyme catalyses tRNA(Glu) + L-glutamate + ATP = L-glutamyl-tRNA(Glu) + AMP + diphosphate. Its function is as follows. Catalyzes the attachment of glutamate to tRNA(Glu) in a two-step reaction: glutamate is first activated by ATP to form Glu-AMP and then transferred to the acceptor end of tRNA(Glu). The protein is Glutamate--tRNA ligase of Aeromonas hydrophila subsp. hydrophila (strain ATCC 7966 / DSM 30187 / BCRC 13018 / CCUG 14551 / JCM 1027 / KCTC 2358 / NCIMB 9240 / NCTC 8049).